The primary structure comprises 324 residues: NAC domain-containing protein 30 (324 aa).

One can recognise an NAC domain in the interval 9-158 (MPPGFRFHPT…GWVVCRAFRK (150 aa)). Residues 109–164 (IGMRKTLVYYKGRAPNGRKSDWIMHEYRLQNSELAPVQEEGWVVCRAFRKPIPNQR) mediate DNA binding. Low complexity predominate over residues 232–244 (LPQLDSPSLSPSL). The interval 232–259 (LPQLDSPSLSPSLGTNKDQNESFEQEEE) is disordered.

The protein belongs to the plant vascular related NAC-domain protein family. In terms of assembly, forms homodimer and heterodimers with other VND proteins (e.g. NAC037/VND1, NAC076/VND2 and NAC105/VND3) via their N-termini. Interacts with NAC083/VNI2. As to expression, expressed in developing protoxylems in roots and shoots. Detected in root protoxylem poles and in vessels of protoxylems, outermost metaxylems, inner metaxylems, shoots and hypocotyls. Expressed in roots, hypocotyls, cotyledons and leaves. Accumulates in the xylem but not in interfascicular fibers or pith cells in inflorescence stems. Present in developing vessels of the secondary xylem in roots undergoing secondary growth.

It localises to the nucleus. Its function is as follows. Transcription activator that binds to the secondary wall NAC binding element (SNBE), 5'-(T/A)NN(C/T)(T/C/G)TNNNNNNNA(A/C)GN(A/C/T)(A/T)-3', in the promoter of target genes (e.g. genes involved in secondary wall biosynthesis, cell wall modification such as xylan accumulation, and programmed cell death). Involved in xylem formation in roots and shoots, especially regulating protoxylem vessel differentiation by promoting immature xylem vessel-specific genes expression. Can activate the expression of several genes including XCP1, MYB46, NAC010/SND3, MYB103, MYB58, MYB63, MYB83, KNAT7, ASL19 and ASL20. In terms of biological role, required for the soilborne fungal pathogen Verticillium longisporum-induced transdifferentiation of chloroplast-containing bundle sheath cells to functional xylem elements leading to stunted growth, vein clearing, and leaf chloroses, as well as xylem hyperplasia within the vasculature of leaves, hypocotyls, and roots due to reinitiation of cambial activity and transdifferentiation of xylem parenchyma cells. This developmental reprogramming also mediates an increased drought stress tolerance. The chain is NAC domain-containing protein 30 from Arabidopsis thaliana (Mouse-ear cress).